The following is a 479-amino-acid chain: Ubiquinone biosynthesis monooxygenase COQ6, mitochondrial (479 aa).

Belongs to the UbiH/COQ6 family. Component of a multi-subunit COQ enzyme complex, composed of at least COQ3, COQ4, COQ5, COQ6, COQ7 and COQ9. FAD is required as a cofactor.

The protein localises to the mitochondrion inner membrane. It carries out the reaction 4-hydroxy-3-(all-trans-decaprenyl)benzoate + 2 reduced [2Fe-2S]-[ferredoxin] + O2 + 2 H(+) = 3,4-dihydroxy-5-(all-trans-decaprenyl)benzoate + 2 oxidized [2Fe-2S]-[ferredoxin] + H2O. The enzyme catalyses 2-methoxy-6-(all-trans-decaprenyl)phenol + 2 reduced [2Fe-2S]-[ferredoxin] + O2 + 2 H(+) = 2-methoxy-6-(all-trans-decaprenyl)benzene-1,4-diol + 2 oxidized [2Fe-2S]-[ferredoxin] + H2O. It functions in the pathway cofactor biosynthesis; ubiquinone biosynthesis. Its function is as follows. FAD-dependent monooxygenase required for two non-consecutive steps during ubiquinone biosynthesis. Required for the C5-ring hydroxylation during ubiquinone biosynthesis by catalyzing the hydroxylation of 4-hydroxy-3-(all-trans-decaprenyl)benzoic acid to 3,4-dihydroxy-5-(all-trans-decaprenyl)benzoic acid. Also acts downstream of COQ4, for the C1-hydroxylation during ubiquinone biosynthesis by catalyzing the hydroxylation of 2-methoxy-6-(all-trans-decaprenyl)phenol to 2-methoxy-6-(all-trans-decaprenyl)benzene-1,4-diol. The electrons required for the hydroxylation reaction are funneled indirectly to coq6 from NADPH via a ferredoxin/ferredoxin reductase system. This is Ubiquinone biosynthesis monooxygenase COQ6, mitochondrial from Schizosaccharomyces pombe (strain 972 / ATCC 24843) (Fission yeast).